An 89-amino-acid polypeptide reads, in one-letter code: Small ribosomal subunit protein uS15 (89 aa).

Belongs to the universal ribosomal protein uS15 family. As to quaternary structure, part of the 30S ribosomal subunit. Forms a bridge to the 50S subunit in the 70S ribosome, contacting the 23S rRNA.

Functionally, one of the primary rRNA binding proteins, it binds directly to 16S rRNA where it helps nucleate assembly of the platform of the 30S subunit by binding and bridging several RNA helices of the 16S rRNA. In terms of biological role, forms an intersubunit bridge (bridge B4) with the 23S rRNA of the 50S subunit in the ribosome. This Heliobacterium modesticaldum (strain ATCC 51547 / Ice1) protein is Small ribosomal subunit protein uS15.